The sequence spans 251 residues: Triosephosphate isomerase (251 aa).

9 to 11 (NWK) is a binding site for substrate. The Electrophile role is filled by His-95. Residue Glu-167 is the Proton acceptor of the active site. Residues Gly-173, Ser-213, and 234–235 (GG) each bind substrate.

The protein belongs to the triosephosphate isomerase family. In terms of assembly, homodimer.

The protein resides in the cytoplasm. It catalyses the reaction D-glyceraldehyde 3-phosphate = dihydroxyacetone phosphate. The protein operates within carbohydrate biosynthesis; gluconeogenesis. Its pathway is carbohydrate degradation; glycolysis; D-glyceraldehyde 3-phosphate from glycerone phosphate: step 1/1. Its function is as follows. Involved in the gluconeogenesis. Catalyzes stereospecifically the conversion of dihydroxyacetone phosphate (DHAP) to D-glyceraldehyde-3-phosphate (G3P). In Geobacter metallireducens (strain ATCC 53774 / DSM 7210 / GS-15), this protein is Triosephosphate isomerase.